A 187-amino-acid chain; its full sequence is Ribosome-recycling factor (187 aa).

Belongs to the RRF family.

The protein localises to the cytoplasm. Functionally, responsible for the release of ribosomes from messenger RNA at the termination of protein biosynthesis. May increase the efficiency of translation by recycling ribosomes from one round of translation to another. The sequence is that of Ribosome-recycling factor from Parvibaculum lavamentivorans (strain DS-1 / DSM 13023 / NCIMB 13966).